Consider the following 388-residue polypeptide: GTPase Obg (388 aa).

The Obg domain occupies 1 to 159 (MKFVDEAVIR…RSLKLELLLL (159 aa)). In terms of domain architecture, OBG-type G spans 160-333 (ADVGLLGMPN…LALKLLDYIA (174 aa)). Residues 166-173 (GMPNAGKS), 191-195 (FTTLV), 213-216 (DIPG), 283-286 (NKTD), and 314-316 (SAY) contribute to the GTP site. Mg(2+) is bound by residues Ser-173 and Thr-193.

Belongs to the TRAFAC class OBG-HflX-like GTPase superfamily. OBG GTPase family. In terms of assembly, monomer. Requires Mg(2+) as cofactor.

The protein localises to the cytoplasm. In terms of biological role, an essential GTPase which binds GTP, GDP and possibly (p)ppGpp with moderate affinity, with high nucleotide exchange rates and a fairly low GTP hydrolysis rate. Plays a role in control of the cell cycle, stress response, ribosome biogenesis and in those bacteria that undergo differentiation, in morphogenesis control. The sequence is that of GTPase Obg from Shewanella putrefaciens (strain CN-32 / ATCC BAA-453).